Consider the following 304-residue polypeptide: MSLMVISMACVAFFLLQGAWPHEGFRRKPSLLAHPGPLVKSEETVILQCWSDVMFEHFLLHREGTFNHTLRLIGEHIDGVSKGNFSIGRMTQDLAGTYRCYGSVTHSPYQLSAPSDPLDIVITGLYEKPSLSAQPGPTVLAGESVTLSCSSRSSYDMYHLSREGEAHERRLPAGPKVNRTFQADFPLDPATHGGTYRCFGSFRDSPYEWSKSSDPLLVSVTGNSSNSWPSPTEPSSETGNPRHLHVLIGTSVVKLPFTILLFFLLHRWCSNKKNASVMDQGPAGNRTVNREDSDEQDHQEVSYA.

An N-terminal signal peptide occupies residues 1-21 (MSLMVISMACVAFFLLQGAWP). Over 22-245 (HEGFRRKPSL…SETGNPRHLH (224 aa)) the chain is Extracellular. 2 Ig-like C2-type domains span residues 42-107 (EETV…VTHS) and 142-205 (GESV…FRDS). Disulfide bonds link Cys49–Cys100 and Cys149–Cys198. Asn67, Asn84, Asn178, and Asn223 each carry an N-linked (GlcNAc...) asparagine glycan. The chain crosses the membrane as a helical span at residues 246-264 (VLIGTSVVKLPFTILLFFL). Residues 265-304 (LHRWCSNKKNASVMDQGPAGNRTVNREDSDEQDHQEVSYA) lie on the Cytoplasmic side of the membrane. Residues 275–304 (ASVMDQGPAGNRTVNREDSDEQDHQEVSYA) form a disordered region. Residues 288 to 304 (VNREDSDEQDHQEVSYA) are compositionally biased toward basic and acidic residues.

The protein belongs to the immunoglobulin superfamily. In terms of assembly, interacts with TYROBP. N-glycosylated, glycosylation varies depending on the allele which alters cell surface expression levels. Expressed on a discrete subset of peripheral blood NK cells.

The protein localises to the cell membrane. Its function is as follows. Activating natural killer (NK) receptor that recognizes C2 epitopes of HLA-C alleles. Bridging the innate and adaptive immune systems, NK cells express a number of cell surface receptors which either inhibit or stimulate their cytotoxicity. Able to activate NK cells citotoxicity and cytokine production such as IFNG. Receptor functions are attenuated even lost in some alleles, such as KIR2DS5*002 represented in this entry. In Homo sapiens (Human), this protein is Killer cell immunoglobulin-like receptor 2DS5.